The sequence spans 326 residues: MTGSSSQFQQLEKLGEGTYATVYKGRNRATGALVALKEISLDSEEGTPSTAIREISLMKELDHENIVTLYDVIHTENKLTLVFEYMDKDLKKYMEVHGQQSALDLKVVKSFMFQLLKGIMFCHDNRVLHRDLKPQNLLINNKGELKLGDFGLARAFGIPFNTFSNEVVTLWYRAPDVLLGSRAYTTSIDIWSAGCIFAEMCTGKPLFPGTANEDQLIKIFRLMGTPNERTWPGISQYTNYKNNWQIFVPQDLRLIVPNLDSMGLNLLQSLLQMRPESRITARQALQHPWFHEITMPNAVPQHLSDPYQQQQQQQQHPHQPIIDQQY.

The Protein kinase domain occupies 8–290 (FQQLEKLGEG…ARQALQHPWF (283 aa)). ATP-binding positions include 14-22 (LGEGTYATV) and Lys37. Asp131 functions as the Proton acceptor in the catalytic mechanism. The interval 300 to 326 (PQHLSDPYQQQQQQQQHPHQPIIDQQY) is disordered. Low complexity predominate over residues 305–326 (DPYQQQQQQQQHPHQPIIDQQY).

It belongs to the protein kinase superfamily. CMGC Ser/Thr protein kinase family. CDC2/CDKX subfamily. In terms of assembly, interacts with a number of cyclins.

The enzyme catalyses L-seryl-[protein] + ATP = O-phospho-L-seryl-[protein] + ADP + H(+). It carries out the reaction L-threonyl-[protein] + ATP = O-phospho-L-threonyl-[protein] + ADP + H(+). Functionally, when phosphate concentrations are high it phosphorylates the PHO4 transcription factor thus establishing repression. In Candida albicans (Yeast), this protein is Negative regulator of the PHO system (PHO85).